The primary structure comprises 214 residues: Exosome complex component RRP46 homolog (214 aa).

The protein belongs to the RNase PH family. Homodimer. Component of the RNA exosome complex. Interacts with crn-4; interaction promotes the DNase activity of crn-4. Interacts with crn-3, cps-6 and cyn-13.

It localises to the cytoplasm. The protein resides in the nucleus. Functionally, non-catalytic component of the RNA exosome complex which has 3'-&gt;5' exoribonuclease activity and participates in a multitude of cellular RNA processing and degradation events. Involved in apoptotic DNA degradation. In vitro, does not bind or digest single-stranded RNA. In vitro, binds to double-stranded DNA without detectable DNase activity. The chain is Exosome complex component RRP46 homolog from Caenorhabditis elegans.